The primary structure comprises 375 residues: MTSNENFENGFDLPPPDDSAEDLKLFIKKFERSLNSALLEFDENNQETIENFRQAKEHKMRFETECDQKLRNWKRLAIEREVSEEQSGEVQFPRWIDEWANTKLGGIFERIFSKMDSMQNDMNSRFDAMQTEMSVMKNGIASIKGEMAEMKGEMTVMKNDIASIKGEMAEMKGEMAVMKNDIASIKGEMAEMKGEMTVMKNDIASIKGEMAEMKGEMTIMKSDIDSVKGETTTLKGEVTAMKDSISQLDRKIDLLDQRTEERFNNMAQTMQKIDDRSCKSMMLTRKYENMVRSDMHYSAVPVPFLNGDEPRDYELPPLASFEDIDNLTKEQCIQYLHGYGVNKFSPLETVKLKERLQEAIGLWSKGHESHKYHTF.

Belongs to the UPF0612 family.

It is found in the cytoplasm. This Schizosaccharomyces pombe (strain 972 / ATCC 24843) (Fission yeast) protein is UPF0612 protein C569.003.